The primary structure comprises 103 residues: Small ribosomal subunit protein uS10 (103 aa).

Belongs to the universal ribosomal protein uS10 family. As to quaternary structure, part of the 30S ribosomal subunit.

Involved in the binding of tRNA to the ribosomes. The chain is Small ribosomal subunit protein uS10 from Cutibacterium acnes (strain DSM 16379 / KPA171202) (Propionibacterium acnes).